A 500-amino-acid polypeptide reads, in one-letter code: NAD(P)H-quinone oxidoreductase chain 4, chloroplastic (500 aa).

A run of 14 helical transmembrane segments spans residues 4–24 (FPWL…IFFF), 35–55 (YTIC…CYHF), 87–107 (IGPV…AWPV), 113–130 (LFHF…GSFS), 134–154 (LLLF…LLSM), 167–187 (FILY…GMGL), 208–228 (ALEI…LPII), 242–262 (HYST…YGLV), 272–292 (AHSI…IYAA), 305–325 (IAYS…SITD), 330–350 (GAIL…FLAG), 386–406 (LALP…GIIT), 416–436 (ILIT…SLSM), and 463–483 (FVSI…DFVF).

This sequence belongs to the complex I subunit 4 family.

It is found in the plastid. The protein resides in the chloroplast thylakoid membrane. The enzyme catalyses a plastoquinone + NADH + (n+1) H(+)(in) = a plastoquinol + NAD(+) + n H(+)(out). It catalyses the reaction a plastoquinone + NADPH + (n+1) H(+)(in) = a plastoquinol + NADP(+) + n H(+)(out). The sequence is that of NAD(P)H-quinone oxidoreductase chain 4, chloroplastic from Nandina domestica (Heavenly bamboo).